The following is a 49-amino-acid chain: Large ribosomal subunit protein eL40 (49 aa).

It belongs to the eukaryotic ribosomal protein eL40 family.

This Methanosarcina acetivorans (strain ATCC 35395 / DSM 2834 / JCM 12185 / C2A) protein is Large ribosomal subunit protein eL40.